The sequence spans 233 residues: C-type lectin domain-containing protein 87 (233 aa).

The first 20 residues, Met-1–Ala-20, serve as a signal peptide directing secretion. An N-linked (GlcNAc...) asparagine glycan is attached at Asn-26. The O-linked (Xyl...) (chondroitin sulfate) serine glycan is linked to Ser-32. The N-linked (GlcNAc...) asparagine glycan is linked to Asn-81. One can recognise a C-type lectin domain in the interval Phe-93–Glu-223. 2 disulfides stabilise this stretch: Cys-114-Cys-222 and Cys-193-Cys-214. N-linked (GlcNAc...) asparagine glycosylation occurs at Asn-225.

In Caenorhabditis briggsae, this protein is C-type lectin domain-containing protein 87.